We begin with the raw amino-acid sequence, 443 residues long: Phosphoglucosamine mutase (443 aa).

S101 functions as the Phosphoserine intermediate in the catalytic mechanism. 4 residues coordinate Mg(2+): S101, D239, D241, and D243. S101 carries the post-translational modification Phosphoserine.

The protein belongs to the phosphohexose mutase family. Mg(2+) serves as cofactor. Activated by phosphorylation.

It carries out the reaction alpha-D-glucosamine 1-phosphate = D-glucosamine 6-phosphate. In terms of biological role, catalyzes the conversion of glucosamine-6-phosphate to glucosamine-1-phosphate. This is Phosphoglucosamine mutase from Francisella tularensis subsp. tularensis (strain FSC 198).